The following is a 400-amino-acid chain: Proline-rich protein 5 (400 aa).

The disordered stretch occupies residues 301–358 (TDSTSKLSMAGTKPPGEGERPPISNGQFPPLHNLSDSQQGLYNSQRDSPLLPAPSSSP). The span at 334–347 (LSDSQQGLYNSQRD) shows a compositional bias: polar residues. Over residues 348–358 (SPLLPAPSSSP) the composition is skewed to low complexity.

This sequence belongs to the PROTOR family. As to quaternary structure, associated component of the mechanistic target of rapamycin complex 2 (mTORC2).

Associated subunit of mTORC2, which regulates cell growth and survival in response to hormonal signals. This Xenopus laevis (African clawed frog) protein is Proline-rich protein 5 (prr5).